The sequence spans 428 residues: Serine--tRNA ligase (428 aa).

Position 231–233 (231–233 (TAE)) interacts with L-serine. Position 262 to 264 (262 to 264 (RSE)) interacts with ATP. Glu-285 lines the L-serine pocket. 349–352 (EISS) contacts ATP. Ser-385 contributes to the L-serine binding site.

This sequence belongs to the class-II aminoacyl-tRNA synthetase family. Type-1 seryl-tRNA synthetase subfamily. As to quaternary structure, homodimer. The tRNA molecule binds across the dimer.

The protein localises to the cytoplasm. It carries out the reaction tRNA(Ser) + L-serine + ATP = L-seryl-tRNA(Ser) + AMP + diphosphate + H(+). It catalyses the reaction tRNA(Sec) + L-serine + ATP = L-seryl-tRNA(Sec) + AMP + diphosphate + H(+). The protein operates within aminoacyl-tRNA biosynthesis; selenocysteinyl-tRNA(Sec) biosynthesis; L-seryl-tRNA(Sec) from L-serine and tRNA(Sec): step 1/1. In terms of biological role, catalyzes the attachment of serine to tRNA(Ser). Is also able to aminoacylate tRNA(Sec) with serine, to form the misacylated tRNA L-seryl-tRNA(Sec), which will be further converted into selenocysteinyl-tRNA(Sec). The protein is Serine--tRNA ligase of Staphylococcus aureus (strain MW2).